Reading from the N-terminus, the 776-residue chain is Endonuclease MutS2 (776 aa).

330–337 (GPNTGGKT) contacts ATP. Residues 701–776 (LDLRGMRYEE…GSGATIAILK (76 aa)) form the Smr domain.

It belongs to the DNA mismatch repair MutS family. MutS2 subfamily. Homodimer. Binds to stalled ribosomes, contacting rRNA.

Functionally, endonuclease that is involved in the suppression of homologous recombination and thus may have a key role in the control of bacterial genetic diversity. In terms of biological role, acts as a ribosome collision sensor, splitting the ribosome into its 2 subunits. Detects stalled/collided 70S ribosomes which it binds and splits by an ATP-hydrolysis driven conformational change. Acts upstream of the ribosome quality control system (RQC), a ribosome-associated complex that mediates the extraction of incompletely synthesized nascent chains from stalled ribosomes and their subsequent degradation. Probably generates substrates for RQC. This Lactococcus lactis subsp. cremoris (strain SK11) protein is Endonuclease MutS2.